The chain runs to 359 residues: MMKISFIIATLNSGGAERALVTLANALCKEHEVSIIKFHAGESFYKLENEVKVTSLEQFRFDTLYHKIASRFKKFFALRKALKESKSDVFISFLDTTNIACIAAKIGLKTPLIISEHSNEAYLKPKIWRFLRRVSYPFCDALSVLGSSDKVYYERFVKRVKLLLNPCHFSDEISFDSSFEKENLVLFIGRLDHNKNPVMFLKAIAHLDKNLQENYKFVIAGDGQLRQELEYKVKSLGIKVDFLGRVENVKALYEKAKVLCLCSFVEGLPTVLIESLYFEVCRISSSYYNGAKDLIKDNHDGLLVGCDDEIALAKKLELVLNDENFRKELVNNAKQRCKDFEISHIKEEWLKLIAEVKNA.

Substrate is bound at residue E17. Y45 lines the UDP-N-acetyl-alpha-D-galactosamine pocket. 71–74 is a substrate binding site; it reads RFKK. UDP-N-acetyl-alpha-D-galactosamine contacts are provided by residues H117, R190, K195, V246, and 266-274; that span reads EGLPTVLIE. R190 lines the substrate pocket.

Belongs to the glycosyltransferase group 1 family.

The protein localises to the cell inner membrane. The enzyme catalyses N-acetyl-alpha-D-galactosaminyl-(1-&gt;4)-N-acetyl-alpha-D-galactosaminyl-(1-&gt;3)-N,N'-diacetyl-alpha-D-bacillosaminyl-tri-trans,heptacis-undecaprenyl diphosphate + 3 UDP-N-acetyl-alpha-D-galactosamine = [alpha-D-GalNAc-(1-&gt;4)]4-alpha-D-GalNAc-(1-&gt;3)-alpha-D-diNAcBac-tri-trans,hepta-cis-undecaprenyl diphosphate + 3 UDP + 3 H(+). Its pathway is protein modification; protein glycosylation. In terms of biological role, processive glycosyltransferase that is part of the biosynthetic pathway of the lipid-linked oligosaccharide (LLO) that serves as the glycan donor in bacterial protein N-glycosylation. Catalyzes the transfer of exactly three alpha-(1-&gt;4)-N-acetylgalactosamine (GalNAc) units to the growing LLO precursor, GalNAc-alpha-(1-&gt;4)-GalNAc-alpha-(1-&gt;3)-diNAcBac-PP-undecaprenyl. Cannot accept UDP-GlcNAc as substrate. This chain is GalNAc-alpha-(1-&gt;4)-GalNAc-alpha-(1-&gt;3)-diNAcBac-PP-undecaprenol alpha-1,4-N-acetyl-D-galactosaminyltransferase, found in Campylobacter jejuni subsp. jejuni serotype O:2 (strain ATCC 700819 / NCTC 11168).